Here is a 235-residue protein sequence, read N- to C-terminus: N-alpha-acetyltransferase 10 (235 aa).

Methionine 1 carries the N-acetylmethionine modification. The interval 1–58 is interaction with NAA15; the sequence is MNIRNARPEDLMNMQHCNLLCLPENYQMKYYFYHGLSWPQLSYIAEDENGKIVGYVLA. Residues 1–152 form the N-acetyltransferase domain; that stretch reads MNIRNARPED…DAYAMKRDLT (152 aa). Residue lysine 136 is modified to N6-acetyllysine; by autocatalysis. Basic and acidic residues predominate over residues 196–213; that stretch reads EEKGLAAEDSGGDSKDLS. Residues 196–235 form a disordered region; it reads EEKGLAAEDSGGDSKDLSEVSETTESTDVKDSSEASDSAS. Residue serine 205 is modified to Phosphoserine. Position 209 is a phosphoserine; by IKKB (serine 209). 2 positions are modified to phosphoserine: serine 213 and serine 216.

This sequence belongs to the acetyltransferase family. ARD1 subfamily. Component of the N-terminal acetyltransferase A complex (also called the NatA complex) composed of NAA10 and NAA15. Interacts with NAA15. Component of the N-terminal acetyltransferase A (NatA)/HYPK complex at least composed of NAA10, NAA15 and HYPK, which has N-terminal acetyltransferase activity. In complex with NAA15, interacts with HYPK. Component of the N-terminal acetyltransferase E (NatE) complex at least composed of NAA10, NAA15 and NAA50. Within the complex interacts with NAA15; the interaction is required for binding to NAAT50. Interacts with NAAT50. The interaction of the NatA complex with NAA50 reduces the acetylation activity of the NatA complex. Component of the N-terminal acetyltransferase E (NatE)/HYPK complex at least composed of NAA10, NAA15, NAA50 and HYPK. In complex with NAA15, interacts with HYPK; the interaction with HYPK reduces the capacity of the NatA complex to interact with NAA50. Interacts with HIF1A (via its ODD domain); the interaction increases HIF1A protein stability during normoxia, an down-regulates it when induced by hypoxia. Interacts with the ribosome. Binds to MYLK. Interacts with NAA16. Interacts (via its C-terminal domain) with TSC2, leading to its acetylation. Interacts with IKBKB. Interacts with HSPA1A and HSPA1B leading to its acetylation. Post-translationally, cleaved by caspases during apoptosis. In terms of processing, phosphorylation by IKBKB/IKKB at Ser-209 destabilises NAA10 and promotes its proteasome-mediated degradation. Autoacetylated at Lys-136 which stimulates its catalytic activity. Ubiquitous.

It is found in the cytoplasm. Its subcellular location is the nucleus. The catalysed reaction is N-terminal glycyl-[protein] + acetyl-CoA = N-terminal N(alpha)-acetylglycyl-[protein] + CoA + H(+). It carries out the reaction N-terminal L-alanyl-[protein] + acetyl-CoA = N-terminal N(alpha)-acetyl-L-alanyl-[protein] + CoA + H(+). The enzyme catalyses N-terminal L-seryl-[protein] + acetyl-CoA = N-terminal N(alpha)-acetyl-L-seryl-[protein] + CoA + H(+). It catalyses the reaction N-terminal L-valyl-[protein] + acetyl-CoA = N-terminal N(alpha)-acetyl-L-valyl-[protein] + CoA + H(+). The catalysed reaction is N-terminal L-cysteinyl-[protein] + acetyl-CoA = N-terminal N(alpha)-acetyl-L-cysteinyl-[protein] + CoA + H(+). It carries out the reaction N-terminal L-threonyl-[protein] + acetyl-CoA = N-terminal N(alpha)-acetyl-L-threonyl-[protein] + CoA + H(+). Catalytic subunit of the N-terminal acetyltransferase A (NatA) complex which displays alpha (N-terminal) acetyltransferase activity. Acetylates amino termini that are devoid of initiator methionine. The alpha (N-terminal) acetyltransferase activity may be important for vascular, hematopoietic and neuronal growth and development. Without NAA15, displays epsilon (internal) acetyltransferase activity towards HIF1A, thereby promoting its degradation. Represses MYLK kinase activity by acetylation, and thus represses tumor cell migration. Acetylates, and stabilizes TSC2, thereby repressing mTOR activity and suppressing cancer development. Acetylates HSPA1A and HSPA1B at 'Lys-77' which enhances its chaperone activity and leads to preferential binding to co-chaperone HOPX. Acetylates HIST1H4A. Acts as a negative regulator of sister chromatid cohesion during mitosis. The chain is N-alpha-acetyltransferase 10 (Naa10) from Mus musculus (Mouse).